We begin with the raw amino-acid sequence, 78 residues long: Beta-defensin 29 (78 aa).

A signal peptide spans 1–23 (MPVTKPYFVTVAVLLILVDKTTG). Intrachain disulfides connect Cys-40/Cys-67, Cys-47/Cys-61, and Cys-51/Cys-68.

It belongs to the beta-defensin family.

The protein localises to the secreted. Functionally, has antibacterial activity. The chain is Beta-defensin 29 (Defb29) from Rattus norvegicus (Rat).